The primary structure comprises 609 residues: Granule-bound starch synthase 1, chloroplastic/amyloplastic (609 aa).

A chloroplast-targeting transit peptide spans 1 to 77 (MSALTTSQLA…SRRFPSVVVY (77 aa)). Residues 29 to 67 (RHGFQGLKPRSPAGGDATSLSVTTSARATPKQQRSVQRG) form a disordered region. Positions 46–66 (TSLSVTTSARATPKQQRSVQR) are enriched in polar residues. An ADP-alpha-D-glucose-binding site is contributed by lysine 97. Positions 100, 408, 413, 462, and 493 each coordinate ADP. Cysteine 337 and cysteine 529 are joined by a disulfide.

Belongs to the glycosyltransferase 1 family. Bacterial/plant glycogen synthase subfamily.

Its subcellular location is the plastid. The protein localises to the chloroplast. It localises to the amyloplast. The enzyme catalyses an NDP-alpha-D-glucose + [(1-&gt;4)-alpha-D-glucosyl](n) = [(1-&gt;4)-alpha-D-glucosyl](n+1) + a ribonucleoside 5'-diphosphate + H(+). Its pathway is glycan biosynthesis; starch biosynthesis. Required for the synthesis of amylose in endosperm. This Oryza sativa subsp. indica (Rice) protein is Granule-bound starch synthase 1, chloroplastic/amyloplastic (WAXY).